The primary structure comprises 174 residues: Cuticle protein 1 (174 aa).

The first 18 residues, 1–18 (MRFLIAFVAILGYASASA), serve as a signal peptide directing secretion.

The protein localises to the secreted. This chain is Cuticle protein 1, found in Lonomia obliqua (Moth).